Reading from the N-terminus, the 414-residue chain is DNA polymerase IV 1 (414 aa).

The UmuC domain occupies 8-189 (IFHIDMNSFY…LPVGEMHGVG (182 aa)). Positions 12 and 108 each coordinate Mg(2+). The active site involves Glu109. A disordered region spans residues 391–414 (LKKEESKTKGTSFNKDFFQDEKKS).

This sequence belongs to the DNA polymerase type-Y family. As to quaternary structure, monomer. Mg(2+) serves as cofactor.

Its subcellular location is the cytoplasm. It catalyses the reaction DNA(n) + a 2'-deoxyribonucleoside 5'-triphosphate = DNA(n+1) + diphosphate. Poorly processive, error-prone DNA polymerase involved in untargeted mutagenesis. Copies undamaged DNA at stalled replication forks, which arise in vivo from mismatched or misaligned primer ends. These misaligned primers can be extended by PolIV. Exhibits no 3'-5' exonuclease (proofreading) activity. May be involved in translesion synthesis (TSL), in conjunction with the beta clamp from PolIII. This Bacillus subtilis (strain 168) protein is DNA polymerase IV 1 (dinB1).